The chain runs to 406 residues: 2,3-bisphosphoglycerate-independent phosphoglycerate mutase (406 aa).

Residues 156 to 165 (ITEGDPHKEG) are compositionally biased toward basic and acidic residues. Residues 156-177 (ITEGDPHKEGVPIPEVKPLDNS) are disordered.

The protein belongs to the BPG-independent phosphoglycerate mutase family. A-PGAM subfamily.

The catalysed reaction is (2R)-2-phosphoglycerate = (2R)-3-phosphoglycerate. It functions in the pathway carbohydrate degradation; glycolysis; pyruvate from D-glyceraldehyde 3-phosphate: step 3/5. Catalyzes the interconversion of 2-phosphoglycerate and 3-phosphoglycerate. This is 2,3-bisphosphoglycerate-independent phosphoglycerate mutase from Methanococcus aeolicus (strain ATCC BAA-1280 / DSM 17508 / OCM 812 / Nankai-3).